Here is a 204-residue protein sequence, read N- to C-terminus: Ribosomal RNA small subunit methyltransferase J (204 aa).

Residues 55–56 (RD), 71–72 (ER), and Asp123 each bind S-adenosyl-L-methionine.

This sequence belongs to the methyltransferase superfamily. RsmJ family.

The protein localises to the cytoplasm. It catalyses the reaction guanosine(1516) in 16S rRNA + S-adenosyl-L-methionine = N(2)-methylguanosine(1516) in 16S rRNA + S-adenosyl-L-homocysteine + H(+). Functionally, specifically methylates the guanosine in position 1516 of 16S rRNA. The sequence is that of Ribosomal RNA small subunit methyltransferase J from Rhodopseudomonas palustris (strain TIE-1).